The chain runs to 502 residues: Arabinose import ATP-binding protein AraG (502 aa).

ABC transporter domains follow at residues 6-241 (LEFD…MVGR) and 252-497 (REVG…MVES). An ATP-binding site is contributed by 38-45 (GENGAGKS).

It belongs to the ABC transporter superfamily. Arabinose importer (TC 3.A.1.2.2) family. In terms of assembly, the complex is composed of two ATP-binding proteins (AraG), two transmembrane proteins (AraH) and a solute-binding protein (AraF).

It is found in the cell inner membrane. The enzyme catalyses L-arabinose(out) + ATP + H2O = L-arabinose(in) + ADP + phosphate + H(+). Functionally, part of the ABC transporter complex AraFGH involved in arabinose import. Responsible for energy coupling to the transport system. The polypeptide is Arabinose import ATP-binding protein AraG (Mannheimia succiniciproducens (strain KCTC 0769BP / MBEL55E)).